A 423-amino-acid polypeptide reads, in one-letter code: Site-specific recombinase Flp (423 aa).

The Tyr recombinase Flp-type domain occupies 136-422; it reads GNSHSKKMLK…DYLSSYINRR (287 aa). The O-(3'-phospho-DNA)-tyrosine intermediate role is filled by Y343.

This sequence belongs to the 'phage' integrase family. In terms of assembly, homotetramer.

Functionally, part of the plasmid amplification system, which corrects any decrease in copy number caused by a rare missegregation event. Catalyzes the recombination between the large inverted repetitions of the 2-micron plasmid during plasmid replication. This recombination event changes the direction of one of the two replication forks in the bidirectionally replicating molecule, effectively resulting in multiple rounds of replication from a single initiation event. Binds specifically to the FLP recognition target (FRT) site where it induces DNA to bend. Three types of bend exist. Type I is approximately 60 degrees and results from 1 FLP molecule binding to 1 symmetry element. Type II is &gt;144 degrees and results from FLP molecules binding to symmetry elements a and b. Type III is approximately 65 degrees and results from FLP molecules binding to symmetry elements b and c. This is Site-specific recombinase Flp (FLP1) from Saccharomyces cerevisiae (strain ATCC 204508 / S288c) (Baker's yeast).